The chain runs to 447 residues: Protein mab-21-like 4 (447 aa).

This chain is Protein mab-21-like 4, found in Homo sapiens (Human).